The primary structure comprises 181 residues: Large ribosomal subunit protein uL5 (181 aa).

The protein belongs to the universal ribosomal protein uL5 family. As to quaternary structure, part of the 50S ribosomal subunit; part of the 5S rRNA/L5/L18/L25 subcomplex. Contacts the 5S rRNA and the P site tRNA. Forms a bridge to the 30S subunit in the 70S ribosome.

Its function is as follows. This is one of the proteins that bind and probably mediate the attachment of the 5S RNA into the large ribosomal subunit, where it forms part of the central protuberance. In the 70S ribosome it contacts protein S13 of the 30S subunit (bridge B1b), connecting the 2 subunits; this bridge is implicated in subunit movement. Contacts the P site tRNA; the 5S rRNA and some of its associated proteins might help stabilize positioning of ribosome-bound tRNAs. In Campylobacter jejuni subsp. jejuni serotype O:6 (strain 81116 / NCTC 11828), this protein is Large ribosomal subunit protein uL5.